A 305-amino-acid polypeptide reads, in one-letter code: tRNA dimethylallyltransferase (305 aa).

12-19 (GPTASGKT) provides a ligand contact to ATP. 14–19 (TASGKT) is a substrate binding site. Interaction with substrate tRNA stretches follow at residues 37–40 (DSAL), 161–165 (QRLAR), and 242–247 (RCVGYR).

It belongs to the IPP transferase family. In terms of assembly, monomer. Mg(2+) is required as a cofactor.

It carries out the reaction adenosine(37) in tRNA + dimethylallyl diphosphate = N(6)-dimethylallyladenosine(37) in tRNA + diphosphate. In terms of biological role, catalyzes the transfer of a dimethylallyl group onto the adenine at position 37 in tRNAs that read codons beginning with uridine, leading to the formation of N6-(dimethylallyl)adenosine (i(6)A). In Psychromonas ingrahamii (strain DSM 17664 / CCUG 51855 / 37), this protein is tRNA dimethylallyltransferase.